The sequence spans 424 residues: UPF0229 protein PputGB1_0427 (424 aa).

Positions 81–107 (EFTAGEHIPRPQGGGGGGGGRGKAGNS) are disordered. A compositionally biased stretch (gly residues) spans 92–107 (QGGGGGGGGRGKAGNS).

The protein belongs to the UPF0229 family.

In Pseudomonas putida (strain GB-1), this protein is UPF0229 protein PputGB1_0427.